A 227-amino-acid polypeptide reads, in one-letter code: Cytochrome c oxidase subunit 2 (227 aa).

Residues 1–26 (MATWSNLNLQNSSSPLMEQLIFFHDH) are Mitochondrial intermembrane-facing. A helical membrane pass occupies residues 27 to 48 (TLMILLMITVLVAYIMSMLFFN). Topologically, residues 49-62 (LYTNRFLLEGQTIE) are mitochondrial matrix. The helical transmembrane segment at 63–82 (IIWTILPAITLIFIALPSLR) threads the bilayer. Residues 83 to 227 (LLYLLDESMD…FINWIKNYSS (145 aa)) are Mitochondrial intermembrane-facing. 6 residues coordinate Cu cation: His-160, Cys-195, Glu-197, Cys-199, His-203, and Met-206. Glu-197 is a binding site for Mg(2+).

The protein belongs to the cytochrome c oxidase subunit 2 family. As to quaternary structure, component of the cytochrome c oxidase (complex IV, CIV), a multisubunit enzyme composed of a catalytic core of 3 subunits and several supernumerary subunits. The complex exists as a monomer or a dimer and forms supercomplexes (SCs) in the inner mitochondrial membrane with ubiquinol-cytochrome c oxidoreductase (cytochrome b-c1 complex, complex III, CIII). Cu cation is required as a cofactor.

The protein resides in the mitochondrion inner membrane. It catalyses the reaction 4 Fe(II)-[cytochrome c] + O2 + 8 H(+)(in) = 4 Fe(III)-[cytochrome c] + 2 H2O + 4 H(+)(out). Its function is as follows. Component of the cytochrome c oxidase, the last enzyme in the mitochondrial electron transport chain which drives oxidative phosphorylation. The respiratory chain contains 3 multisubunit complexes succinate dehydrogenase (complex II, CII), ubiquinol-cytochrome c oxidoreductase (cytochrome b-c1 complex, complex III, CIII) and cytochrome c oxidase (complex IV, CIV), that cooperate to transfer electrons derived from NADH and succinate to molecular oxygen, creating an electrochemical gradient over the inner membrane that drives transmembrane transport and the ATP synthase. Cytochrome c oxidase is the component of the respiratory chain that catalyzes the reduction of oxygen to water. Electrons originating from reduced cytochrome c in the intermembrane space (IMS) are transferred via the dinuclear copper A center (CU(A)) of subunit 2 and heme A of subunit 1 to the active site in subunit 1, a binuclear center (BNC) formed by heme A3 and copper B (CU(B)). The BNC reduces molecular oxygen to 2 water molecules using 4 electrons from cytochrome c in the IMS and 4 protons from the mitochondrial matrix. This is Cytochrome c oxidase subunit 2 (COII) from Acheta domesticus (House cricket).